We begin with the raw amino-acid sequence, 357 residues long: 3-isopropylmalate dehydrogenase (357 aa).

76–89 (GPKWDDLPSEKRPE) lines the NAD(+) pocket. The substrate site is built by Arg96, Arg106, Arg135, and Asp224. Asp224, Asp248, and Asp252 together coordinate Mg(2+). 282–294 (GSAPDIAGQDKAN) provides a ligand contact to NAD(+).

The protein belongs to the isocitrate and isopropylmalate dehydrogenases family. LeuB type 1 subfamily. Homodimer. It depends on Mg(2+) as a cofactor. Mn(2+) serves as cofactor.

Its subcellular location is the cytoplasm. It carries out the reaction (2R,3S)-3-isopropylmalate + NAD(+) = 4-methyl-2-oxopentanoate + CO2 + NADH. The protein operates within amino-acid biosynthesis; L-leucine biosynthesis; L-leucine from 3-methyl-2-oxobutanoate: step 3/4. Catalyzes the oxidation of 3-carboxy-2-hydroxy-4-methylpentanoate (3-isopropylmalate) to 3-carboxy-4-methyl-2-oxopentanoate. The product decarboxylates to 4-methyl-2 oxopentanoate. This is 3-isopropylmalate dehydrogenase from Nitratidesulfovibrio vulgaris (strain ATCC 29579 / DSM 644 / CCUG 34227 / NCIMB 8303 / VKM B-1760 / Hildenborough) (Desulfovibrio vulgaris).